We begin with the raw amino-acid sequence, 102 residues long: NADH-quinone oxidoreductase subunit K (102 aa).

A run of 3 helical transmembrane segments spans residues 6–26 (MEHG…GLLI), 30–50 (LLFI…AFVV), and 65–85 (ILVI…LLLL).

This sequence belongs to the complex I subunit 4L family. As to quaternary structure, NDH-1 is composed of 14 different subunits. Subunits NuoA, H, J, K, L, M, N constitute the membrane sector of the complex.

It localises to the cell inner membrane. It catalyses the reaction a quinone + NADH + 5 H(+)(in) = a quinol + NAD(+) + 4 H(+)(out). NDH-1 shuttles electrons from NADH, via FMN and iron-sulfur (Fe-S) centers, to quinones in the respiratory chain. The immediate electron acceptor for the enzyme in this species is believed to be ubiquinone. Couples the redox reaction to proton translocation (for every two electrons transferred, four hydrogen ions are translocated across the cytoplasmic membrane), and thus conserves the redox energy in a proton gradient. This Aeromonas hydrophila subsp. hydrophila (strain ATCC 7966 / DSM 30187 / BCRC 13018 / CCUG 14551 / JCM 1027 / KCTC 2358 / NCIMB 9240 / NCTC 8049) protein is NADH-quinone oxidoreductase subunit K.